The following is a 395-amino-acid chain: Flap endonuclease 1 (395 aa).

The N-domain stretch occupies residues M1–K104. D34 contacts Mg(2+). R47 and R70 together coordinate DNA. Mg(2+) is bound by residues D86, E158, E160, D179, and D181. Positions D122 to H253 are I-domain. E158 contributes to the DNA binding site. The DNA site is built by G231 and D233. D233 serves as a coordination point for Mg(2+). The interval Q341–F349 is interaction with PCNA. The disordered stretch occupies residues R344–A395. Basic and acidic residues predominate over residues K365–A386.

It belongs to the XPG/RAD2 endonuclease family. FEN1 subfamily. As to quaternary structure, interacts with PCNA. Three molecules of FEN1 bind to one PCNA trimer with each molecule binding to one PCNA monomer. PCNA stimulates the nuclease activity without altering cleavage specificity. The cofactor is Mg(2+). Phosphorylated. Phosphorylation upon DNA damage induces relocalization to the nuclear plasma.

It is found in the nucleus. The protein localises to the nucleolus. It localises to the nucleoplasm. Its subcellular location is the mitochondrion. Its function is as follows. Structure-specific nuclease with 5'-flap endonuclease and 5'-3' exonuclease activities involved in DNA replication and repair. During DNA replication, cleaves the 5'-overhanging flap structure that is generated by displacement synthesis when DNA polymerase encounters the 5'-end of a downstream Okazaki fragment. It enters the flap from the 5'-end and then tracks to cleave the flap base, leaving a nick for ligation. Also involved in the long patch base excision repair (LP-BER) pathway, by cleaving within the apurinic/apyrimidinic (AP) site-terminated flap. Acts as a genome stabilization factor that prevents flaps from equilibrating into structures that lead to duplications and deletions. Also possesses 5'-3' exonuclease activity on nicked or gapped double-stranded DNA, and exhibits RNase H activity. Also involved in replication and repair of rDNA and in repairing mitochondrial DNA. In Fusarium vanettenii (strain ATCC MYA-4622 / CBS 123669 / FGSC 9596 / NRRL 45880 / 77-13-4) (Fusarium solani subsp. pisi), this protein is Flap endonuclease 1.